A 375-amino-acid polypeptide reads, in one-letter code: Sulfite efflux pump SSU1 (375 aa).

Topologically, residues 1–25 (MPSGSGFHNIEEAGEKARKRDDWIA) are cytoplasmic. Residues 26 to 46 (ISNFHPGWFSVNMGTGITAIL) traverse the membrane as a helical segment. The Extracellular portion of the chain corresponds to 47 to 59 (LQNLPYQFPGLHY). A helical membrane pass occupies residues 60 to 80 (IAVILFILNVIIFFLFLTISI). Over 81–101 (TRYCLWPDKFKAMLAHPAHSM) the chain is Cytoplasmic. The chain crosses the membrane as a helical span at residues 102-122 (LLGTFPMGFATIINCIVFICV). The Extracellular segment spans residues 123 to 135 (PVWGEWASRFAWG). The chain crosses the membrane as a helical span at residues 136–156 (LWWIDAAVSVAICYFVPFMLM). Residues 157 to 167 (TKHTSSLETMT) are Cytoplasmic-facing. The chain crosses the membrane as a helical span at residues 168–188 (AAWLLPIVAPVVAAASGGVVA). Over 189–200 (DSLQNDTHALIT) the chain is Extracellular. A glycan (N-linked (GlcNAc...) asparagine) is linked at Asn193. A helical transmembrane segment spans residues 201-221 (ILVCYVMWGSAVPLAMVILVI). The Cytoplasmic segment spans residues 222–234 (YFQRLAIHKLVPR). A helical transmembrane segment spans residues 235 to 255 (AAIVSALLPIGPLGQGGFGLM). At 256-277 (QLGVVAKRVFPRLDFLAPIAGD) the chain is on the extracellular side. Residues 278-298 (IFYVMGAFIAMIMWGFGLIWL) traverse the membrane as a helical segment. Topologically, residues 299 to 309 (WFALASFTRGK) are cytoplasmic. The chain crosses the membrane as a helical span at residues 310 to 330 (FYFNIGWWAFTFPLGVFTTAT). The Extracellular portion of the chain corresponds to 331-343 (TQMGKEFNSPFFD). Residues 344–364 (ILGTFFSIVVTCMWVLVFALT) form a helical membrane-spanning segment. The Cytoplasmic segment spans residues 365–375 (VYKSCTKELFR).

Belongs to the tellurite-resistance/dicarboxylate transporter (TDT) family.

It localises to the cell membrane. Sulphite efflux pump required for the secretion of sulphite as a reducing agent. In the presence of sulphite, cystine in keratin is directly cleaved to cysteine and S-sulphocysteine, and thereby, reduced proteins become accessible to hydrolysis by a variety of secreted endo- and exoproteases. Excretion of sulphite mediated by an efflux pump also represents a detoxification pathway for dermatophytes during infection of the epidermal stratum corneum, hair and nails, which are rich in cysteine. This is Sulfite efflux pump SSU1 from Arthroderma benhamiae (strain ATCC MYA-4681 / CBS 112371) (Trichophyton mentagrophytes).